We begin with the raw amino-acid sequence, 56 residues long: uncharacterized protein (56 aa).

2 consecutive transmembrane segments (helical) span residues 5 to 23 and 33 to 55; these read VLIFLIGYLPFFLAAYWIY and ITAGAILSFDAAMLAIFGGILGW.

It localises to the cell membrane. This is an uncharacterized protein from Archaeoglobus fulgidus (strain ATCC 49558 / DSM 4304 / JCM 9628 / NBRC 100126 / VC-16).